A 294-amino-acid polypeptide reads, in one-letter code: ATP phosphoribosyltransferase (294 aa).

This sequence belongs to the ATP phosphoribosyltransferase family. Long subfamily. Mg(2+) is required as a cofactor.

It localises to the cytoplasm. The enzyme catalyses 1-(5-phospho-beta-D-ribosyl)-ATP + diphosphate = 5-phospho-alpha-D-ribose 1-diphosphate + ATP. It functions in the pathway amino-acid biosynthesis; L-histidine biosynthesis; L-histidine from 5-phospho-alpha-D-ribose 1-diphosphate: step 1/9. With respect to regulation, feedback inhibited by histidine. Catalyzes the condensation of ATP and 5-phosphoribose 1-diphosphate to form N'-(5'-phosphoribosyl)-ATP (PR-ATP). Has a crucial role in the pathway because the rate of histidine biosynthesis seems to be controlled primarily by regulation of HisG enzymatic activity. The sequence is that of ATP phosphoribosyltransferase from Maricaulis maris (strain MCS10) (Caulobacter maris).